We begin with the raw amino-acid sequence, 43 residues long: Protein PsbN 1 (43 aa).

The chain crosses the membrane as a helical span at residues 3–23 (TATILGILIAAAVVGITVLAL).

It belongs to the PsbN family.

It is found in the cellular thylakoid membrane. Functionally, may play a role in photosystem I and II biogenesis. The sequence is that of Protein PsbN 1 from Microcystis aeruginosa (strain NIES-843 / IAM M-2473).